We begin with the raw amino-acid sequence, 743 residues long: Phosphoribosylformylglycinamidine synthase subunit PurL (743 aa).

His-50 is an active-site residue. ATP-binding residues include Tyr-53 and Lys-92. Glu-94 contacts Mg(2+). Residues 95–98 and Arg-117 each bind substrate; that span reads SHNH. His-96 (proton acceptor) is an active-site residue. Position 118 (Asp-118) interacts with Mg(2+). Residue Gln-241 participates in substrate binding. Asp-269 serves as a coordination point for Mg(2+). 313 to 315 is a substrate binding site; that stretch reads ESQ. Positions 494 and 531 each coordinate ATP. Mg(2+) is bound at residue Asn-532. Ser-534 lines the substrate pocket.

This sequence belongs to the FGAMS family. Monomer. Part of the FGAM synthase complex composed of 1 PurL, 1 PurQ and 2 PurS subunits.

It localises to the cytoplasm. It catalyses the reaction N(2)-formyl-N(1)-(5-phospho-beta-D-ribosyl)glycinamide + L-glutamine + ATP + H2O = 2-formamido-N(1)-(5-O-phospho-beta-D-ribosyl)acetamidine + L-glutamate + ADP + phosphate + H(+). Its pathway is purine metabolism; IMP biosynthesis via de novo pathway; 5-amino-1-(5-phospho-D-ribosyl)imidazole from N(2)-formyl-N(1)-(5-phospho-D-ribosyl)glycinamide: step 1/2. Its function is as follows. Part of the phosphoribosylformylglycinamidine synthase complex involved in the purines biosynthetic pathway. Catalyzes the ATP-dependent conversion of formylglycinamide ribonucleotide (FGAR) and glutamine to yield formylglycinamidine ribonucleotide (FGAM) and glutamate. The FGAM synthase complex is composed of three subunits. PurQ produces an ammonia molecule by converting glutamine to glutamate. PurL transfers the ammonia molecule to FGAR to form FGAM in an ATP-dependent manner. PurS interacts with PurQ and PurL and is thought to assist in the transfer of the ammonia molecule from PurQ to PurL. The protein is Phosphoribosylformylglycinamidine synthase subunit PurL of Rhizobium meliloti (strain 1021) (Ensifer meliloti).